A 534-amino-acid polypeptide reads, in one-letter code: Probable protein kinase UbiB (534 aa).

The chain crosses the membrane as a helical span at residues 23 to 43 (DLLFDLPLPWFLLALRFALPW). The region spanning 125–492 (RFDIEPLASA…WHKRKDDWFL (368 aa)) is the Protein kinase domain. ATP-binding positions include 131–139 (LASASVAQV) and lysine 153. Residue aspartate 288 is the Proton acceptor of the active site. A run of 2 helical transmembrane segments spans residues 490-510 (WFLR…AAGG) and 512-532 (LHEL…YLIV).

It belongs to the ABC1 family. UbiB subfamily.

It is found in the cell inner membrane. It participates in cofactor biosynthesis; ubiquinone biosynthesis [regulation]. Is probably a protein kinase regulator of UbiI activity which is involved in aerobic coenzyme Q (ubiquinone) biosynthesis. The sequence is that of Probable protein kinase UbiB from Pseudomonas fluorescens (strain ATCC BAA-477 / NRRL B-23932 / Pf-5).